Reading from the N-terminus, the 246-residue chain is 1-(5-phosphoribosyl)-5-[(5-phosphoribosylamino)methylideneamino] imidazole-4-carboxamide isomerase (246 aa).

The active-site Proton acceptor is the Asp-8. Asp-131 serves as the catalytic Proton donor.

Belongs to the HisA/HisF family.

It is found in the cytoplasm. The enzyme catalyses 1-(5-phospho-beta-D-ribosyl)-5-[(5-phospho-beta-D-ribosylamino)methylideneamino]imidazole-4-carboxamide = 5-[(5-phospho-1-deoxy-D-ribulos-1-ylimino)methylamino]-1-(5-phospho-beta-D-ribosyl)imidazole-4-carboxamide. It functions in the pathway amino-acid biosynthesis; L-histidine biosynthesis; L-histidine from 5-phospho-alpha-D-ribose 1-diphosphate: step 4/9. The polypeptide is 1-(5-phosphoribosyl)-5-[(5-phosphoribosylamino)methylideneamino] imidazole-4-carboxamide isomerase (Albidiferax ferrireducens (strain ATCC BAA-621 / DSM 15236 / T118) (Rhodoferax ferrireducens)).